The sequence spans 55 residues: Large ribosomal subunit protein bL33 (55 aa).

Over residues 1 to 11 the composition is skewed to basic and acidic residues; sequence MAKGGREKIKL. The interval 1-27 is disordered; it reads MAKGGREKIKLESTAGTGHFYTTSKNK. A compositionally biased stretch (polar residues) spans 14 to 24; that stretch reads TAGTGHFYTTS.

This sequence belongs to the bacterial ribosomal protein bL33 family.

The chain is Large ribosomal subunit protein bL33 from Dechloromonas aromatica (strain RCB).